The primary structure comprises 298 residues: Probable phosphoserine phosphatase (298 aa).

Catalysis depends on Asp-82, which acts as the Nucleophile. Mg(2+)-binding residues include Asp-82 and Asp-84. Residue Asp-84 is the Proton donor of the active site. Substrate-binding positions include Glu-91, Arg-127, 170–171 (SG), and Lys-217. Mg(2+) is bound at residue Asp-240. Asn-243 provides a ligand contact to substrate.

It belongs to the HAD-like hydrolase superfamily. SerB family. It depends on Mg(2+) as a cofactor.

It carries out the reaction O-phospho-L-serine + H2O = L-serine + phosphate. It catalyses the reaction O-phospho-D-serine + H2O = D-serine + phosphate. Its pathway is amino-acid biosynthesis; L-serine biosynthesis; L-serine from 3-phospho-D-glycerate: step 3/3. The chain is Probable phosphoserine phosphatase from Schizosaccharomyces pombe (strain 972 / ATCC 24843) (Fission yeast).